A 354-amino-acid chain; its full sequence is MALISMRQMLDHAAEFGYGVPAFNVNNLEQMRAIMEAADKTDSPVIVQASAGARKYAGAPFLRHLILAAIEEFPHIPVVMHQDHGTSPDVCQRSIQLGFSSVMMDGSLREDGKTPADYDYNVRVTQQTVAFAHACGVSVEGELGCLGSLETGMAGEEDGVGAEGVLDHSQLLTDPEEAADFVKKTKVDALAIAIGTSHGAYKFTKPPTGDTLSIQRIKEIHARIPDTHLVMHGSSSVPQDWLAIINEYGGEIKETYGVPVEEIVEGIKYGVRKVNIDTDLRLASTGAIRRFLAQNPSEFDPRKYFSKTVEAMRDICIARYEAFGTAGNASKIKPISLEGMFQRYARGELDPKVN.

Ser-50 contributes to the D-glyceraldehyde 3-phosphate binding site. Catalysis depends on Asp-83, which acts as the Proton donor. His-84, Asp-105, Glu-142, and His-198 together coordinate Zn(2+). A dihydroxyacetone phosphate-binding site is contributed by Gly-199. Zn(2+) is bound at residue His-232. Dihydroxyacetone phosphate-binding positions include 233–235 (GSS) and 275–278 (NIDT).

The protein belongs to the class II fructose-bisphosphate aldolase family. The cofactor is Zn(2+).

It catalyses the reaction beta-D-fructose 1,6-bisphosphate = D-glyceraldehyde 3-phosphate + dihydroxyacetone phosphate. It functions in the pathway carbohydrate degradation; glycolysis; D-glyceraldehyde 3-phosphate and glycerone phosphate from D-glucose: step 4/4. In terms of biological role, catalyzes the aldol condensation of dihydroxyacetone phosphate (DHAP or glycerone-phosphate) with glyceraldehyde 3-phosphate (G3P) to form fructose 1,6-bisphosphate (FBP) in gluconeogenesis and the reverse reaction in glycolysis. The polypeptide is Fructose-bisphosphate aldolase (fba) (Pseudomonas aeruginosa (strain ATCC 15692 / DSM 22644 / CIP 104116 / JCM 14847 / LMG 12228 / 1C / PRS 101 / PAO1)).